The following is a 70-amino-acid chain: Large ribosomal subunit protein bL31c (70 aa).

This sequence belongs to the bacterial ribosomal protein bL31 family. Type A subfamily. In terms of assembly, part of the 50S ribosomal subunit.

The protein resides in the plastid. The protein localises to the chloroplast. In terms of biological role, binds the 23S rRNA. The chain is Large ribosomal subunit protein bL31c from Pyropia yezoensis (Susabi-nori).